A 617-amino-acid polypeptide reads, in one-letter code: Proline--tRNA ligase (617 aa).

It belongs to the class-II aminoacyl-tRNA synthetase family. ProS type 1 subfamily. Homodimer.

It is found in the cytoplasm. It carries out the reaction tRNA(Pro) + L-proline + ATP = L-prolyl-tRNA(Pro) + AMP + diphosphate. Its function is as follows. Catalyzes the attachment of proline to tRNA(Pro) in a two-step reaction: proline is first activated by ATP to form Pro-AMP and then transferred to the acceptor end of tRNA(Pro). As ProRS can inadvertently accommodate and process non-cognate amino acids such as alanine and cysteine, to avoid such errors it has two additional distinct editing activities against alanine. One activity is designated as 'pretransfer' editing and involves the tRNA(Pro)-independent hydrolysis of activated Ala-AMP. The other activity is designated 'posttransfer' editing and involves deacylation of mischarged Ala-tRNA(Pro). The misacylated Cys-tRNA(Pro) is not edited by ProRS. The polypeptide is Proline--tRNA ligase (Streptococcus pneumoniae (strain 70585)).